Reading from the N-terminus, the 159-residue chain is Transcriptional repressor NrdR (159 aa).

The segment at 3–34 (CPFCRHDDTQVVDSRVSEDGAAIRRRRRCSAC) is a zinc-finger region. One can recognise an ATP-cone domain in the interval 49–139 (PFVVKKDGSR…VYRRFEDVSE (91 aa)).

This sequence belongs to the NrdR family. Zn(2+) serves as cofactor.

In terms of biological role, negatively regulates transcription of bacterial ribonucleotide reductase nrd genes and operons by binding to NrdR-boxes. This is Transcriptional repressor NrdR from Burkholderia cenocepacia (strain ATCC BAA-245 / DSM 16553 / LMG 16656 / NCTC 13227 / J2315 / CF5610) (Burkholderia cepacia (strain J2315)).